Reading from the N-terminus, the 309-residue chain is Ribonuclease Z (309 aa).

Histidine 63, histidine 65, aspartate 67, histidine 68, histidine 141, aspartate 212, and histidine 270 together coordinate Zn(2+). The active-site Proton acceptor is aspartate 67.

This sequence belongs to the RNase Z family. Homodimer. It depends on Zn(2+) as a cofactor.

It carries out the reaction Endonucleolytic cleavage of RNA, removing extra 3' nucleotides from tRNA precursor, generating 3' termini of tRNAs. A 3'-hydroxy group is left at the tRNA terminus and a 5'-phosphoryl group is left at the trailer molecule.. Zinc phosphodiesterase, which displays some tRNA 3'-processing endonuclease activity. Probably involved in tRNA maturation, by removing a 3'-trailer from precursor tRNA. The sequence is that of Ribonuclease Z from Halalkalibacterium halodurans (strain ATCC BAA-125 / DSM 18197 / FERM 7344 / JCM 9153 / C-125) (Bacillus halodurans).